A 733-amino-acid polypeptide reads, in one-letter code: Acyl-coenzyme A oxidase (733 aa).

It belongs to the acyl-CoA oxidase family. FAD is required as a cofactor.

It is found in the peroxisome. The enzyme catalyses a 2,3-saturated acyl-CoA + O2 = a (2E)-enoyl-CoA + H2O2. It functions in the pathway lipid metabolism; peroxisomal fatty acid beta-oxidation. The protein is Acyl-coenzyme A oxidase (POX1) of Eremothecium gossypii (strain ATCC 10895 / CBS 109.51 / FGSC 9923 / NRRL Y-1056) (Yeast).